The chain runs to 129 residues: Glycine cleavage system H protein (129 aa).

The Lipoyl-binding domain occupies 24–106 (SYTVGITEHA…YGEGWFFRVM (83 aa)). At Lys65 the chain carries N6-lipoyllysine.

It belongs to the GcvH family. The glycine cleavage system is composed of four proteins: P, T, L and H. The cofactor is (R)-lipoate.

In terms of biological role, the glycine cleavage system catalyzes the degradation of glycine. The H protein shuttles the methylamine group of glycine from the P protein to the T protein. This chain is Glycine cleavage system H protein, found in Shewanella baltica (strain OS155 / ATCC BAA-1091).